Consider the following 281-residue polypeptide: DegV domain-containing protein CPE2509 (281 aa).

One can recognise a DegV domain in the interval 4–279 (IAIITDSSCD…PGMVGVSIQK (276 aa)). Hexadecanoate is bound by residues Thr-60 and Ser-93.

Functionally, may bind long-chain fatty acids, such as palmitate, and may play a role in lipid transport or fatty acid metabolism. In Clostridium perfringens (strain 13 / Type A), this protein is DegV domain-containing protein CPE2509.